Here is a 761-residue protein sequence, read N- to C-terminus: Pleckstrin homology domain-containing family M member 3 (761 aa).

The residue at position 132 (S132) is a Phosphoserine. PH domains follow at residues 211–308 (NILK…EVVH) and 361–456 (NILK…IAAN). A Phorbol-ester/DAG-type zinc finger spans residues 669–722 (SHVYSCSLCSQKGFICEICNNGEILYPFEDISTSRCESCGAVFHSECKEKSVPC).

In terms of assembly, interacts with AKT1.

Its subcellular location is the cytoplasm. The protein localises to the golgi apparatus. It localises to the cell membrane. Its function is as follows. Involved in skeletal muscle differentiation. May act as a scaffold protein for AKT1 during muscle differentiation. The polypeptide is Pleckstrin homology domain-containing family M member 3 (Homo sapiens (Human)).